Reading from the N-terminus, the 63-residue chain is Large ribosomal subunit protein uL29 (63 aa).

The protein belongs to the universal ribosomal protein uL29 family.

The sequence is that of Large ribosomal subunit protein uL29 from Yersinia pseudotuberculosis serotype O:1b (strain IP 31758).